We begin with the raw amino-acid sequence, 81 residues long: Bacteriochlorophyll c-binding protein (81 aa).

His25 is an a bacteriochlorophyll c binding site.

This sequence belongs to the BChl C/E-binding protein family.

It is found in the chlorosome. Its subcellular location is the chlorosome envelope. In terms of biological role, component of the photosynthetic apparatus. The light harvesting B740 complex binds bacteriochlorophyll c. In Prosthecochloris aestuarii (strain DSM 271 / SK 413), this protein is Bacteriochlorophyll c-binding protein (csmA).